The primary structure comprises 910 residues: UPF0182 protein Acid_6445 (910 aa).

Helical transmembrane passes span 17–37, 56–76, 101–121, 157–177, 210–229, 252–272, and 276–296; these read ITLLAILLFLLFGLRSFAGYA, LYYGIAPVAVATLVAFLALWI, LALLFLAWFIAAGAIDTWTVV, LLRSYVLAVIIFCVLLYWIAA, FLRGAAVIGLIALAVRFYLG, IGLPLQWLVIFACLAAAAFVA, and WFLAALMALALVVDFAAPRIV.

Belongs to the UPF0182 family.

Its subcellular location is the cell membrane. This chain is UPF0182 protein Acid_6445, found in Solibacter usitatus (strain Ellin6076).